Here is a 258-residue protein sequence, read N- to C-terminus: Snake venom serine protease 1 (258 aa).

Positions 1–18 (MVLIRVLANLLILQLSYA) are cleaved as a signal peptide. A propeptide spanning residues 19 to 24 (QKSSEL) is cleaved from the precursor. Residues 25-249 (VVGGDECNIN…YNDWIKSIIA (225 aa)) enclose the Peptidase S1 domain. Cystine bridges form between C31-C163, C50-C66, C98-C256, C142-C210, C174-C189, and C200-C225. N-linked (GlcNAc...) asparagine glycosylation is present at N44. Catalysis depends on charge relay system residues H65 and D110. The active-site Charge relay system is S204.

It belongs to the peptidase S1 family. Snake venom subfamily. Monomer. In terms of tissue distribution, expressed by the venom gland.

It localises to the secreted. Snake venom serine protease that may act in the hemostasis system of the prey. The protein is Snake venom serine protease 1 (TLG1) of Craspedocephalus gramineus (Bamboo pit viper).